The primary structure comprises 39 residues: AGRGKQGGKVRAKAKTRSSRAGLQFPVGRVHRLLRKGNY.

The span at A1–S18 shows a compositional bias: basic residues. The tract at residues A1–Q24 is disordered. An N6-(2-hydroxyisobutyryl)lysine modification is found at K5. Residue K5 is modified to N6-acetyllysine. Position 9 is an N6-(2-hydroxyisobutyryl)lysine; alternate (K9). Position 9 is an N6-lactoyllysine; alternate (K9). Residue K9 is modified to N6-succinyllysine. Residues K13 and K15 each participate in a glycyl lysine isopeptide (Lys-Gly) (interchain with G-Cter in ubiquitin) cross-link. K36 is modified (N6-(2-hydroxyisobutyryl)lysine; alternate).

The protein belongs to the histone H2A family. As to quaternary structure, the nucleosome is a histone octamer containing two molecules each of H2A, H2B, H3 and H4 assembled in one H3-H4 heterotetramer and two H2A-H2B heterodimers. The octamer wraps approximately 147 bp of DNA. In terms of processing, monoubiquitination of C-terminus gives a specific tag for epigenetic transcriptional repression. Following DNA double-strand breaks (DSBs), it is ubiquitinated through 'Lys-63' linkage of ubiquitin moieties.

It localises to the nucleus. The protein localises to the chromosome. Its function is as follows. Core component of nucleosome. Nucleosomes wrap and compact DNA into chromatin, limiting DNA accessibility to the cellular machineries which require DNA as a template. Histones thereby play a central role in transcription regulation, DNA repair, DNA replication and chromosomal stability. DNA accessibility is regulated via a complex set of post-translational modifications of histones, also called histone code, and nucleosome remodeling. Functionally, buforins are strong antimicrobial activities in vitro against a broad-spectrum of microorganisms including fungi. Buforin II is more potent than buforin I. The polypeptide is Histone H2A (Bufo gargarizans (Asian toad)).